The chain runs to 183 residues: Probable cobalt-precorrin-6B C(15)-methyltransferase (decarboxylating) (183 aa).

S-adenosyl-L-methionine-binding positions include T19, 43–47 (GCGSG), D64, and A92.

This sequence belongs to the methyltransferase superfamily. Archaeal-type CbiT family.

The enzyme catalyses Co-precorrin-6B + S-adenosyl-L-methionine = Co-precorrin-7 + S-adenosyl-L-homocysteine + CO2. The protein operates within cofactor biosynthesis; adenosylcobalamin biosynthesis; cob(II)yrinate a,c-diamide from sirohydrochlorin (anaerobic route): step 8/10. Functionally, catalyzes the methylation of C-15 in cobalt-precorrin-6B followed by the decarboxylation of C-12 to form cobalt-precorrin-7. The polypeptide is Probable cobalt-precorrin-6B C(15)-methyltransferase (decarboxylating) (Methanocaldococcus jannaschii (strain ATCC 43067 / DSM 2661 / JAL-1 / JCM 10045 / NBRC 100440) (Methanococcus jannaschii)).